Reading from the N-terminus, the 263-residue chain is Protein PYRICULARIA ORYZAE RESISTANCE 21 (263 aa).

Residues 1-68 enclose the HMA domain; that stretch reads MGILVISVDL…IWCKAGKIIK (68 aa). Cysteine 12 and cysteine 15 together coordinate a metal cation. A disordered region spans residues 126–153; sequence CEKPKPCEKPPPCKPEEPPKPPPEKPPP. Residues 139–153 show a composition bias toward basic and acidic residues; the sequence is KPEEPPKPPPEKPPP.

In terms of biological role, involved in defense responses. Contributes to slowing defense responses toward Magnaporthe oryzae. This chain is Protein PYRICULARIA ORYZAE RESISTANCE 21, found in Oryza sativa subsp. indica (Rice).